Here is an 83-residue protein sequence, read N- to C-terminus: Protein L83L (83 aa).

The disordered stretch occupies residues 1–26 (MDTSLKKNNGALEADNKNYQNYKDEP).

This sequence belongs to the asfivirus L83L family. Interacts with host IL1B.

It localises to the host cytoplasm. Its function is as follows. May subvert the host innate immune response by interacting with host IL1B and interfering with its function. The protein is Protein L83L of Ornithodoros (relapsing fever ticks).